Consider the following 324-residue polypeptide: Signal peptidase I (324 aa).

Met-1 carries the post-translational modification Blocked amino end (Met). At 1–3 (MAN) the chain is on the periplasmic side. Residues 4 to 22 (MFALILVIATLVTGILWCV) traverse the membrane as a helical segment. The Cytoplasmic portion of the chain corresponds to 23 to 58 (DKFFFAPKRRERQAAAQAAAGDSLDKATLKKVAPKP). Residues 59–77 (GWLETGASVFPVLAIVLIV) form a helical membrane-spanning segment. The Periplasmic portion of the chain corresponds to 78-324 (RSFIYEPFQI…LRLSRIGGIH (247 aa)). Catalysis depends on residues Ser-91 and Lys-146. The cysteines at positions 171 and 177 are disulfide-linked.

It belongs to the peptidase S26 family.

It localises to the cell inner membrane. It catalyses the reaction Cleavage of hydrophobic, N-terminal signal or leader sequences from secreted and periplasmic proteins.. The polypeptide is Signal peptidase I (lepB) (Escherichia coli (strain K12)).